Here is a 449-residue protein sequence, read N- to C-terminus: MGKYFGTDGVRGVANRELTPELAFQIGRCGGYVLTKSAERPKVLIGRDTRISGHMLEGALVAGLLSIGAEVMRLGVISTPGVAYLTKALGAQAGIMISASHNPVQDNGIKFFGPDGFKLSDEQEAEIEALIDSAEDMLPRPIGAGLGQVNDYFEGGQKYLQYLKQTIDEEDFSGMKIALDCAHGATSSLATYLFADLDADVVTMGASPNGLNINEGVGSTHPEALAAFVKEKGADVGLAFDGDGDRLIAVDERGNIVDGDQIMYICAKYLKETGRLKQQTVVSTVMSNLGFYKALEAQGIKSVQTAVGDRYVVEEMKKNGYNLGGEQSGHIIFLDYNTTGDGMLTALQLVNIMKIKGKPLSELAGEMKKYPQLLVNVRVADKEKAMENEQVKKVIQEVEAEMNGNGRVLVRPSGTEPLVRIMAEAQTEEACRAYVERIADVVRREMGVE.

Ser-100 functions as the Phosphoserine intermediate in the catalytic mechanism. Positions 100, 241, 243, and 245 each coordinate Mg(2+). Ser-100 carries the post-translational modification Phosphoserine.

The protein belongs to the phosphohexose mutase family. Requires Mg(2+) as cofactor. Activated by phosphorylation.

The catalysed reaction is alpha-D-glucosamine 1-phosphate = D-glucosamine 6-phosphate. Functionally, catalyzes the conversion of glucosamine-6-phosphate to glucosamine-1-phosphate. This Geobacillus kaustophilus (strain HTA426) protein is Phosphoglucosamine mutase.